The following is a 420-amino-acid chain: UDP-N-acetylglucosamine 1-carboxyvinyltransferase (420 aa).

22–23 provides a ligand contact to phosphoenolpyruvate; sequence KN. R92 is a binding site for UDP-N-acetyl-alpha-D-glucosamine. C116 serves as the catalytic Proton donor. At C116 the chain carries 2-(S-cysteinyl)pyruvic acid O-phosphothioketal. Residues 121-125, D307, and L329 each bind UDP-N-acetyl-alpha-D-glucosamine; that span reads RPIDL.

Belongs to the EPSP synthase family. MurA subfamily.

Its subcellular location is the cytoplasm. The enzyme catalyses phosphoenolpyruvate + UDP-N-acetyl-alpha-D-glucosamine = UDP-N-acetyl-3-O-(1-carboxyvinyl)-alpha-D-glucosamine + phosphate. It functions in the pathway cell wall biogenesis; peptidoglycan biosynthesis. In terms of biological role, cell wall formation. Adds enolpyruvyl to UDP-N-acetylglucosamine. This Nitratiruptor sp. (strain SB155-2) protein is UDP-N-acetylglucosamine 1-carboxyvinyltransferase.